We begin with the raw amino-acid sequence, 225 residues long: Tryptophan synthase beta chain (225 aa).

The protein belongs to the TrpB family. Tetramer of two alpha and two beta chains. Pyridoxal 5'-phosphate is required as a cofactor.

It carries out the reaction (1S,2R)-1-C-(indol-3-yl)glycerol 3-phosphate + L-serine = D-glyceraldehyde 3-phosphate + L-tryptophan + H2O. It functions in the pathway amino-acid biosynthesis; L-tryptophan biosynthesis; L-tryptophan from chorismate: step 5/5. Functionally, the beta subunit is responsible for the synthesis of L-tryptophan from indole and L-serine. The chain is Tryptophan synthase beta chain (trpB) from Buchnera aphidicola subsp. Rhopalosiphum maidis.